The following is a 162-amino-acid chain: GTP-dependent dephospho-CoA kinase (162 aa).

Positions 40, 41, 42, 59, 61, and 111 each coordinate GTP.

The protein belongs to the GTP-dependent DPCK family.

It catalyses the reaction 3'-dephospho-CoA + GTP = GDP + CoA + H(+). It functions in the pathway cofactor biosynthesis; coenzyme A biosynthesis. In terms of biological role, catalyzes the GTP-dependent phosphorylation of the 3'-hydroxyl group of dephosphocoenzyme A to form coenzyme A (CoA). The chain is GTP-dependent dephospho-CoA kinase from Sulfurisphaera tokodaii (strain DSM 16993 / JCM 10545 / NBRC 100140 / 7) (Sulfolobus tokodaii).